A 186-amino-acid polypeptide reads, in one-letter code: ATP synthase subunit delta, chloroplastic (186 aa).

This sequence belongs to the ATPase delta chain family. In terms of assembly, F-type ATPases have 2 components, F(1) - the catalytic core - and F(0) - the membrane proton channel. F(1) has five subunits: alpha(3), beta(3), gamma(1), delta(1), epsilon(1). CF(0) has four main subunits: a(1), b(1), b'(1) and c(10-14). The alpha and beta chains form an alternating ring which encloses part of the gamma chain. F(1) is attached to F(0) by a central stalk formed by the gamma and epsilon chains, while a peripheral stalk is formed by the delta, b and b' chains.

The protein localises to the plastid. It localises to the chloroplast thylakoid membrane. In terms of biological role, f(1)F(0) ATP synthase produces ATP from ADP in the presence of a proton or sodium gradient. F-type ATPases consist of two structural domains, F(1) containing the extramembraneous catalytic core and F(0) containing the membrane proton channel, linked together by a central stalk and a peripheral stalk. During catalysis, ATP synthesis in the catalytic domain of F(1) is coupled via a rotary mechanism of the central stalk subunits to proton translocation. This protein is part of the stalk that links CF(0) to CF(1). It either transmits conformational changes from CF(0) to CF(1) or is implicated in proton conduction. The chain is ATP synthase subunit delta, chloroplastic from Pyropia yezoensis (Susabi-nori).